The sequence spans 332 residues: Fructose-1,6-bisphosphatase class 1 (332 aa).

Residues glutamate 89, aspartate 110, leucine 112, and aspartate 113 each contribute to the Mg(2+) site. Substrate contacts are provided by residues 113–116, asparagine 206, tyrosine 239, 257–259, and lysine 269; these read DGSS and YLY. Glutamate 275 contacts Mg(2+).

It belongs to the FBPase class 1 family. Homotetramer. Mg(2+) serves as cofactor.

The protein localises to the cytoplasm. The enzyme catalyses beta-D-fructose 1,6-bisphosphate + H2O = beta-D-fructose 6-phosphate + phosphate. Its pathway is carbohydrate biosynthesis; gluconeogenesis. The polypeptide is Fructose-1,6-bisphosphatase class 1 (Klebsiella pneumoniae subsp. pneumoniae (strain ATCC 700721 / MGH 78578)).